Here is a 270-residue protein sequence, read N- to C-terminus: A-type potassium channel modulatory protein KCNIP2 (270 aa).

Over residues 1–17 (MRGQGRKESLSESRDLD) the composition is skewed to basic and acidic residues. The interval 1 to 34 (MRGQGRKESLSESRDLDGSYDQLTGHPPGPSKKA) is disordered. Residue S9 is modified to Phosphoserine. 2 S-palmitoyl cysteine lipidation sites follow: C45 and C46. The EF-hand 1; degenerate domain maps to 81–137 (FELSTVCHRPEGLEQLQEQTKFTRRELQVLYRGFKNECPSGIVNEENFKQIYSQFFP). EF-hand domains follow at residues 140-175 (DSSNYATFLFNAFDTNHDGSVSFEDFVAGLSVILRG), 176-211 (TIDDRLSWAFNLYDLNKDGCITKEEMLDIMKSIYDM), and 224-259 (APREHVESFFQKMDRNKDGVVTIEEFIESCQQDENI). The Ca(2+) site is built by D153, N155, D157, S159, D164, D189, N191, D193, C195, E200, D237, N239, D241, and E248. Residues 257–270 (ENIMRSMQLFDNVI) are interaction with KCND2.

The protein belongs to the recoverin family. As to quaternary structure, component of heteromultimeric potassium channels. Identified in potassium channel complexes containing KCND1, KCND2, KCND3, KCNIP1, KCNIP2, KCNIP3, KCNIP4, DPP6 and DPP10. The KCND2-KCNIP2 channel complex contains four KCND2 and four KCNIP2 subunits. Interacts with KCND2. Probably part of a complex consisting of KCNIP1, KCNIP2 isoform 3 and KCND2. At least isoform 2 and isoform 3 can self-associate to form homodimers and homotetramers. Isoform 3 interacts with KCNIP1 in a calcium-dependent manner. Interacts with KCND3; each KCNIP2 monomer interacts with two adjacent KCND3 subunits, through both the N-terminal inactivation ball of a KCND3 subunit and a C-terminal helix from the adjacent KCND3 subunit, clamping them together; this interaction modulates the channel gating kinetics. Post-translationally, palmitoylated. Palmitoylation enhances association with the plasma membrane. Expressed in heart, brain and lung. In brain, abundantly expressed in striatum, hippocampus and olfactory bulb, moderately expressed in cerebral cortex and lowly expressed in thalamus and hypothalamus. Isoform 1 is predominant in cerebral cortex, striatum and hippocampus. Isoform 1, isoform 2 and isoform 3 are equally expressed in olfactory bulb. Iisoform 3 is expressed at high levels and isoform 1 at low levels in heart (in PubMed:11263977).

The protein resides in the cell membrane. Its function is as follows. Regulatory subunit of Kv4/D (Shal)-type voltage-gated rapidly inactivating A-type potassium channels. Modulates channel density, inactivation kinetics and rate of recovery from inactivation in a calcium-dependent and isoform-specific manner. Involved in KCND2 and KCND3 trafficking to the cell surface. Essential for the expression of I(To) currents in the heart. Required for normal protein levels of KCND2 in the heart ventricle. In Rattus norvegicus (Rat), this protein is A-type potassium channel modulatory protein KCNIP2.